Consider the following 277-residue polypeptide: Putative acetylornithine deacetylase (277 aa).

It carries out the reaction N(2)-acetyl-L-ornithine + H2O = L-ornithine + acetate. It participates in amino-acid biosynthesis; L-arginine biosynthesis; L-ornithine from N(2)-acetyl-L-ornithine (linear): step 1/1. The protein is Putative acetylornithine deacetylase (argE) of Leptospira biflexa.